The sequence spans 1139 residues: Integrin alpha ina-1 (1139 aa).

The N-terminal stretch at 1–19 (MRECIISWTLLLCLSCVKS) is a signal peptide. The Extracellular segment spans residues 20 to 1084 (FNLDVNAPIY…PTIGDSRPIP (1065 aa)). Residues 21–85 (NLDVNAPIYR…CDINTFYNGG (65 aa)) form an FG-GAP 1 repeat. Asparagine 108 and asparagine 136 each carry an N-linked (GlcNAc...) asparagine glycan. FG-GAP repeat units lie at residues 111–171 (RGRT…LQST), 180–231 (LPTT…IFDS), 242–302 (NGDM…SSSK), 307–370 (EDKF…QRKQ), 378–438 (HPPK…IEKF), and 448–510 (GNDL…MEKR). The N-linked (GlcNAc...) asparagine glycan is linked to asparagine 313. Asparagine 580, asparagine 788, asparagine 851, and asparagine 1026 each carry an N-linked (GlcNAc...) asparagine glycan. Residues 1085–1106 (WWIYVIAAVIGVLILSLIIICL) traverse the membrane as a helical segment. Residues 1107–1139 (SKCGFFKRNRLDQPSLYTAQLKHEREEWADTGL) are Cytoplasmic-facing.

This sequence belongs to the integrin alpha chain family. As to quaternary structure, heterodimer of an alpha and a beta subunit. Alpha ina-1 associates with beta pat-3. Interacts (via cytoplasmic domain) with src-1 (when phosphorylated at 'Tyr-416').

It localises to the membrane. It is found in the cell projection. The protein localises to the phagocytic cup. Its subcellular location is the cytoplasmic vesicle. The protein resides in the phagosome membrane. In terms of biological role, plays a role in cell migration, axon fasciculation, and morphogenesis. During gonad morphogenesis, involved in distal tip cell (DTC)-mediated guidance of gonad elongation, in maintaining their sharp tapering morphology and in their migration. Involved in the anterior-posterior positioning of QR neuroblast descendants by regulating the migratory speed of QR.p. Probably by acting as a receptor for apoptotic cells, plays a role in the clearance of apoptotic cells during mid-embryogenesis. In Caenorhabditis elegans, this protein is Integrin alpha ina-1 (ina-1).